The following is a 142-amino-acid chain: Large ribosomal subunit protein uL13 (142 aa).

This sequence belongs to the universal ribosomal protein uL13 family. Part of the 50S ribosomal subunit.

Functionally, this protein is one of the early assembly proteins of the 50S ribosomal subunit, although it is not seen to bind rRNA by itself. It is important during the early stages of 50S assembly. In Citrifermentans bemidjiense (strain ATCC BAA-1014 / DSM 16622 / JCM 12645 / Bem) (Geobacter bemidjiensis), this protein is Large ribosomal subunit protein uL13.